The sequence spans 313 residues: Ribosomal RNA small subunit methyltransferase H (313 aa).

S-adenosyl-L-methionine-binding positions include 35-37 (GGH), D55, F79, D101, and Q108.

Belongs to the methyltransferase superfamily. RsmH family.

The protein resides in the cytoplasm. It catalyses the reaction cytidine(1402) in 16S rRNA + S-adenosyl-L-methionine = N(4)-methylcytidine(1402) in 16S rRNA + S-adenosyl-L-homocysteine + H(+). In terms of biological role, specifically methylates the N4 position of cytidine in position 1402 (C1402) of 16S rRNA. This Salmonella agona (strain SL483) protein is Ribosomal RNA small subunit methyltransferase H.